A 465-amino-acid chain; its full sequence is RuvB-like helicase 2 (465 aa).

73–80 contributes to the ATP binding site; that stretch reads GEPSTGKT.

Belongs to the RuvB family. In terms of assembly, forms homohexameric rings. May form a dodecamer with pont made of two stacked hexameric rings. Component of the chromatin remodeling Ino80 complex.

It localises to the nucleus. The catalysed reaction is ATP + H2O = ADP + phosphate + H(+). Acts as a transcriptional coactivator in Wg signaling. Functionally, proposed core component of the chromatin remodeling Ino80 complex which is involved in transcriptional regulation, DNA replication and probably DNA repair. The protein is RuvB-like helicase 2 of Aedes aegypti (Yellowfever mosquito).